A 145-amino-acid chain; its full sequence is D-aminoacyl-tRNA deacylase (145 aa).

Residues 137-138 carry the Gly-cisPro motif, important for rejection of L-amino acids motif; sequence GP.

Belongs to the DTD family. Homodimer.

Its subcellular location is the cytoplasm. The catalysed reaction is glycyl-tRNA(Ala) + H2O = tRNA(Ala) + glycine + H(+). It carries out the reaction a D-aminoacyl-tRNA + H2O = a tRNA + a D-alpha-amino acid + H(+). An aminoacyl-tRNA editing enzyme that deacylates mischarged D-aminoacyl-tRNAs. Also deacylates mischarged glycyl-tRNA(Ala), protecting cells against glycine mischarging by AlaRS. Acts via tRNA-based rather than protein-based catalysis; rejects L-amino acids rather than detecting D-amino acids in the active site. By recycling D-aminoacyl-tRNA to D-amino acids and free tRNA molecules, this enzyme counteracts the toxicity associated with the formation of D-aminoacyl-tRNA entities in vivo and helps enforce protein L-homochirality. This Shewanella oneidensis (strain ATCC 700550 / JCM 31522 / CIP 106686 / LMG 19005 / NCIMB 14063 / MR-1) protein is D-aminoacyl-tRNA deacylase.